A 451-amino-acid chain; its full sequence is MKRTIQETPGPSSTTVPPPKKLNSQRNGSNLEPGSIYFTPIGGISVPRQESESSRSLDEILADIRPINSLHFSFMLDFEFLIGSYPPSLREYPITLVVGAPDAPDLLKCTKNQKLVTVVGASLPIPFGTHHTKMSILEDEDGRFHVIVSTANLVPDDWEFKTQQFYYNFGVKIASGTVPRSDFQDDLLEYLSMYRNQLDTWKQLLQKVDFSQISDRLIFSTPGYHTDPPTQRPGHPRLFRILSEKFPFDASYEHTERCTFVAQCSSIGSLGSAPINWFRGQFLQSLEGANPSPKQKPAKMYLVFPSVEDVRTSCQGYAGGCSVPYRNSVHARQKWLQGNMCKWRSNAKRRTNAVPHCKTYVKYDKKVAIWQLLTSANLSKAAWGEVSFNKSKNVEQLMIRSWEMGVLITDPSRFNIPFDYPLVPYSATDEPFVTDKKHEKPDILGCIWTPP.

The segment at 1 to 34 (MKRTIQETPGPSSTTVPPPKKLNSQRNGSNLEPG) is disordered. Polar residues predominate over residues 22–32 (LNSQRNGSNLE). His131 serves as the catalytic Nucleophile. Lys133 lines the substrate pocket. The interval 266–269 (SIGS) is interaction with DNA. The active-site Proton donor/acceptor is the His356. Substrate is bound at residue Lys358.

The protein belongs to the tyrosyl-DNA phosphodiesterase family.

Its subcellular location is the nucleus. DNA repair enzyme that can remove a variety of covalent adducts from DNA through hydrolysis of a 3'-phosphodiester bond, giving rise to DNA with a free 3' phosphate. Catalyzes the hydrolysis of dead-end complexes between DNA and the topoisomerase I active site tyrosine residue. Hydrolyzes 3'-phosphoglycolates on protruding 3' ends on DNA double-strand breaks due to DNA damage by radiation and free radicals. Acts on blunt-ended double-strand DNA breaks and on single-stranded DNA. May have low 3'exonuclease activity and may be able to remove a single nucleoside from the 3'end of DNA and RNA molecules with 3'hydroxyl groups. Has no exonuclease activity towards DNA or RNA with a 3'phosphate. The sequence is that of Probable tyrosyl-DNA phosphodiesterase from Caenorhabditis elegans.